The chain runs to 158 residues: PRA1 family protein 2 (158 aa).

Helical transmembrane passes span 36-58 (NLNF…TLFT), 62-79 (LLVA…LFFV), 88-108 (FAVL…VIVI), and 113-133 (GLTL…HSAL).

The protein belongs to the PRA1 family.

It is found in the membrane. Its function is as follows. May act as a general Rab protein regulator. This chain is PRA1 family protein 2 (prafB), found in Dictyostelium discoideum (Social amoeba).